A 409-amino-acid chain; its full sequence is Odorant receptor 35a (409 aa).

At 1–35 (MVRYVPRFADGQKVKLAWPLAVFRLNHIFWPLDPS) the chain is on the cytoplasmic side. Residues 36–56 (TGKWGRYLDKVLAVAMSLVFM) form a helical membrane-spanning segment. The Extracellular segment spans residues 57–64 (QHNDAELR). A helical membrane pass occupies residues 65 to 85 (YLRFEASNRNLDAFLTGMPTY). Residues 86 to 139 (LILVEAQFRSLHILLHFEKLQKFLEIFYANIYIDPRKEPEMFRKVDGKMIINRL) are Cytoplasmic-facing. The chain crosses the membrane as a helical span at residues 140-160 (VSAMYGAVISLYLIAPVFSII). An N-linked (GlcNAc...) asparagine glycan is attached at Asn-161. Residues 161-177 (NQSKDFLYSMIFPFDSD) lie on the Extracellular side of the membrane. Residues 178–198 (PLYIFVPLLLTNVWVGIVIDT) traverse the membrane as a helical segment. Topologically, residues 199–273 (MMFGETNLLC…QQLEAQYTVR (75 aa)) are cytoplasmic. The chain crosses the membrane as a helical span at residues 274–294 (VFIMFAFAAGLLCALSFKAYT). The Extracellular segment spans residues 295–302 (NPMANYIY). The helical transmembrane segment at 303–323 (AIWFGAKTVELLSLGQIGSDL) threads the bilayer. At 324 to 379 (AFTTDSLSTMYYLTHWEQILQYSTNPSENLRLLKLINLAIEMNSKPFYVTGLKYFR) the chain is on the cytoplasmic side. The helical transmembrane segment at 380-400 (VSLQAGLKILQASFSYFTFLT) threads the bilayer. Residues 401–409 (SMQRRQMSN) are Extracellular-facing.

This sequence belongs to the insect chemoreceptor superfamily. Heteromeric odorant receptor channel (TC 1.A.69) family. Or1a subfamily. Interacts with Orco. Complexes exist early in the endomembrane system in olfactory sensory neurons (OSNs), coupling these complexes to the conserved ciliary trafficking pathway. In terms of tissue distribution, expressed in ac3B olfactory sensory neurons in the antenna.

The protein localises to the cell membrane. Its function is as follows. Odorant receptor which mediates acceptance or avoidance behavior, depending on its substrates. The odorant receptor repertoire encodes a large collection of odor stimuli that vary widely in identity, intensity, and duration. Forms a complex with Orco to form odorant-sensing units, providing sensitive and prolonged odorant signaling and calcium permeability. Involved in the behavioral responses to esters. Involved in the behavioral responses to butanol, pentanol, hexanol, octanol, propyl acetate, and butyl acetate. This chain is Odorant receptor 35a (Or35a), found in Drosophila melanogaster (Fruit fly).